Consider the following 212-residue polypeptide: phospholipase A2 inhibitor and Ly6/PLAUR domain-containing protein (212 aa).

Residues 1 to 24 form the signal peptide; the sequence is MILFRRHRTFLLAFTLLCTLLGLG. Positions 27 to 117 constitute a UPAR/Ly6 domain; sequence LTCEVCKGSG…NSGSVPPPLN (91 aa). 7 disulfide bridges follow: cysteine 29-cysteine 53, cysteine 32-cysteine 39, cysteine 46-cysteine 74, cysteine 80-cysteine 101, cysteine 102-cysteine 107, cysteine 126-cysteine 152, and cysteine 145-cysteine 173.

Belongs to the CNF-like-inhibitor family.

The protein resides in the secreted. In Mus musculus (Mouse), this protein is phospholipase A2 inhibitor and Ly6/PLAUR domain-containing protein (Pinlyp).